The sequence spans 532 residues: Developmental and secondary metabolism regulator ve1 (532 aa).

The Velvet domain occupies 26-220 (NRSLWYQLTV…ADQGCRVRIR (195 aa)). The short motif at 40-45 (ERARAC) is the Nuclear localization signal element. The span at 217–229 (VRIRRDVRMRKRD) shows a compositional bias: basic residues. 2 disordered regions span residues 217-440 (VRIR…TEPS) and 458-520 (PQVD…RADG). Residues 233-250 (GGNNNNNNNAGNNAGNNG) are compositionally biased toward low complexity. 2 stretches are compositionally biased toward basic and acidic residues: residues 251–260 (FERREEDFGR) and 283–294 (SEHRASYSDVSR). Over residues 302-317 (YPPPPPPPPSYDPTPS) the composition is skewed to pro residues. A compositionally biased stretch (low complexity) spans 397-411 (STSTYVPPSPSVYST). Positions 435–463 (MNTEPSRGSIKISALVEPMPVIEPQVDPL) are PEST. The segment covering 481–493 (FAQNTRPLFNGQR) has biased composition (polar residues).

The protein belongs to the velvet family. VeA subfamily. As to quaternary structure, component of the heterotrimeric velvet complex composed of laeA, ve1 and velB; Ve1 acting as a bridging protein between laeA and velB. Interacts directly with laeA and velB.

The protein localises to the nucleus. It localises to the cytoplasm. In terms of biological role, component of the velvet transcription factor complex that controls sexual/asexual developmental ratio in response to light, promoting sexual development in the darkness while stimulating asexual sporulation under illumination. The velvet complex hat acts as a global regulator for secondary metabolite gene expression. Controls the expression of the aurofusarin and trichothecene gene clusters. Also controls the expression of the deoxynivalenol (DON) gene cluster. Regulates hyphal growth and pigment formation. Acts as a positive regulator of virulence. This is Developmental and secondary metabolism regulator ve1 from Gibberella zeae (strain ATCC MYA-4620 / CBS 123657 / FGSC 9075 / NRRL 31084 / PH-1) (Wheat head blight fungus).